The sequence spans 598 residues: Probable translation initiation factor IF-2 (598 aa).

In terms of domain architecture, tr-type G spans 8-226 (IRQPIISVLG…VTGLAQRFLE (219 aa)). The G1 stretch occupies residues 17-24 (GHVDHGKT). Residue 17–24 (GHVDHGKT) coordinates GTP. Residues 42–46 (GITQH) form a G2 region. Residues 81–84 (DTPG) form a G3 region. GTP is bound by residues 81–85 (DTPGH) and 135–138 (NKVD). The interval 135 to 138 (NKVD) is G4. The G5 stretch occupies residues 203–205 (SGV).

It belongs to the TRAFAC class translation factor GTPase superfamily. Classic translation factor GTPase family. IF-2 subfamily.

Its function is as follows. Function in general translation initiation by promoting the binding of the formylmethionine-tRNA to ribosomes. Seems to function along with eIF-2. The sequence is that of Probable translation initiation factor IF-2 from Methanopyrus kandleri (strain AV19 / DSM 6324 / JCM 9639 / NBRC 100938).